The sequence spans 332 residues: UPF0194 membrane protein YbhG (332 aa).

The first 16 residues, 1-16 (MMKKPVVIGLAVVVLA), serve as a signal peptide directing secretion. A coiled-coil region spans residues 108 to 211 (EEIAQAAAAV…LQDSTLVAPS (104 aa)).

The protein belongs to the UPF0194 family.

It localises to the periplasm. The sequence is that of UPF0194 membrane protein YbhG from Escherichia coli O6:H1 (strain CFT073 / ATCC 700928 / UPEC).